Reading from the N-terminus, the 498-residue chain is Oligopeptide transport system permease protein AmiC (498 aa).

Transmembrane regions (helical) follow at residues 12-32 (SLVS…TLVP), 279-299 (MIVS…ALAV), 316-336 (LSTG…VYIV), 359-379 (SYVL…AIWI), 415-435 (MVPL…GATL), and 461-481 (VVGL…LGDI). The 200-residue stretch at 280-479 (IVSSAITGLI…CISIFSRLLG (200 aa)) folds into the ABC transmembrane type-1 domain.

Belongs to the binding-protein-dependent transport system permease family. OppBC subfamily.

The protein resides in the cell membrane. Part of the binding-protein-dependent transport system for oligopeptides; probably responsible for the translocation of the substrate across the membrane. This is Oligopeptide transport system permease protein AmiC (amiC) from Streptococcus pneumoniae serotype 4 (strain ATCC BAA-334 / TIGR4).